The chain runs to 1282 residues: Trafficking protein particle complex subunit 8 (1282 aa).

Residues 245–287 (TDAIAPGPNGASNQQSPSSPTSSVATISSTMPAVGSVSPNSHP) form a disordered region. Positions 255 to 273 (ASNQQSPSSPTSSVATISS) are enriched in low complexity.

In terms of biological role, plays a role in endoplasmic reticulum to Golgi apparatus trafficking at a very early stage. Involved in collagen secretion. This chain is Trafficking protein particle complex subunit 8, found in Caenorhabditis elegans.